The following is a 787-amino-acid chain: Protocadherin beta-15 (787 aa).

The first 26 residues, 1 to 26, serve as a signal peptide directing secretion; the sequence is MEPAGERFPEQRQVLILLLLLEVTLA. The Extracellular portion of the chain corresponds to 27-690; that stretch reads GWEPRRYSVM…AQADSLTVYL (664 aa). Cadherin domains lie at 35–133, 138–242, 247–347, 352–451, and 456–561; these read VMEE…SPEF, ITLK…APEF, YEVQ…FPEL, LTSP…APAF, and YTLF…SPFV. N-linked (GlcNAc...) asparagine glycans are attached at residues asparagine 418 and asparagine 436. Asparagine 567 carries an N-linked (GlcNAc...) asparagine glycan. Residues 568 to 671 enclose the Cadherin 6 domain; sequence GSAPCTELVP…LVDGFSQPYL (104 aa). The chain crosses the membrane as a helical span at residues 691–711; it reads VVALASVSSLFLFSVLLFVAV. Topologically, residues 712 to 787 are cytoplasmic; sequence RLCRRSRAAS…DSRRKSEFLE (76 aa).

The protein localises to the cell membrane. Potential calcium-dependent cell-adhesion protein. May be involved in the establishment and maintenance of specific neuronal connections in the brain. This chain is Protocadherin beta-15 (PCDHB15), found in Pan troglodytes (Chimpanzee).